The chain runs to 178 residues: MSRIGKRIIEIPSSVQASVEGSKLLFKNSKEKHELETHNRVKITLENNQLSFQPVGEDAQSRAYWGTYGALANNIVTGLSTGFSKTLEVNGVGYKVALGNKTLDLSLGFSHPVKYPIPAGIEMVVEKNTITIKGSDKQKVGQVAAEIRSFRPPEPYKGKGVKYSDEVIIRKAGKTAKK.

The protein belongs to the universal ribosomal protein uL6 family. As to quaternary structure, part of the 50S ribosomal subunit.

Functionally, this protein binds to the 23S rRNA, and is important in its secondary structure. It is located near the subunit interface in the base of the L7/L12 stalk, and near the tRNA binding site of the peptidyltransferase center. The protein is Large ribosomal subunit protein uL6 of Helicobacter pylori (strain G27).